We begin with the raw amino-acid sequence, 363 residues long: Cysteine proteinase 15A (363 aa).

The N-terminal stretch at 1 to 18 (MDRRFLFALFLFAAVATA) is a signal peptide. A propeptide spans 19–131 (VTDDTNNDDF…QKAPILPTTN (113 aa)) (activation peptide). Disulfide bonds link cysteine 153–cysteine 203 and cysteine 187–cysteine 236. The active site involves cysteine 156. Asparagine 249 carries an N-linked (GlcNAc...) asparagine glycan. A disulfide bridge links cysteine 292 with cysteine 347. Residues histidine 299 and asparagine 326 contribute to the active site.

The protein belongs to the peptidase C1 family.

This is Cysteine proteinase 15A from Pisum sativum (Garden pea).